Here is a 439-residue protein sequence, read N- to C-terminus: Histidinol dehydrogenase (439 aa).

NAD(+)-binding residues include Tyr129, Gln193, and Asn222. Substrate contacts are provided by Thr245, Gln267, and His270. Positions 267 and 270 each coordinate Zn(2+). Residues Glu336 and His337 each act as proton acceptor in the active site. Substrate-binding residues include His337, Asp370, Glu424, and His429. Asp370 provides a ligand contact to Zn(2+). Position 429 (His429) interacts with Zn(2+).

This sequence belongs to the histidinol dehydrogenase family. It depends on Zn(2+) as a cofactor.

The enzyme catalyses L-histidinol + 2 NAD(+) + H2O = L-histidine + 2 NADH + 3 H(+). Its pathway is amino-acid biosynthesis; L-histidine biosynthesis; L-histidine from 5-phospho-alpha-D-ribose 1-diphosphate: step 9/9. Functionally, catalyzes the sequential NAD-dependent oxidations of L-histidinol to L-histidinaldehyde and then to L-histidine. In Cutibacterium acnes (strain DSM 16379 / KPA171202) (Propionibacterium acnes), this protein is Histidinol dehydrogenase.